The following is a 178-amino-acid chain: Large ribosomal subunit protein uL6 (178 aa).

It belongs to the universal ribosomal protein uL6 family. As to quaternary structure, part of the 50S ribosomal subunit.

Functionally, this protein binds to the 23S rRNA, and is important in its secondary structure. It is located near the subunit interface in the base of the L7/L12 stalk, and near the tRNA binding site of the peptidyltransferase center. The protein is Large ribosomal subunit protein uL6 of Helicobacter pylori (strain J99 / ATCC 700824) (Campylobacter pylori J99).